Consider the following 50-residue polypeptide: Large ribosomal subunit protein eL39 (50 aa).

This sequence belongs to the eukaryotic ribosomal protein eL39 family.

In Methanoculleus marisnigri (strain ATCC 35101 / DSM 1498 / JR1), this protein is Large ribosomal subunit protein eL39.